Here is a 1649-residue protein sequence, read N- to C-terminus: DNA-directed RNA polymerase subunit beta' (1649 aa).

Zn(2+) contacts are provided by Cys63, Cys65, Cys78, and Cys81. 3 residues coordinate Mg(2+): Asp747, Asp749, and Asp751. 4 residues coordinate Zn(2+): Cys1078, Cys1269, Cys1276, and Cys1279.

Belongs to the RNA polymerase beta' chain family. In terms of assembly, the RNAP catalytic core consists of 2 alpha, 1 beta, 1 beta' and 1 omega subunit. When a sigma factor is associated with the core the holoenzyme is formed, which can initiate transcription. The cofactor is Mg(2+). Zn(2+) serves as cofactor.

The enzyme catalyses RNA(n) + a ribonucleoside 5'-triphosphate = RNA(n+1) + diphosphate. DNA-dependent RNA polymerase catalyzes the transcription of DNA into RNA using the four ribonucleoside triphosphates as substrates. This chain is DNA-directed RNA polymerase subunit beta', found in Thermosipho melanesiensis (strain DSM 12029 / CIP 104789 / BI429).